A 459-amino-acid chain; its full sequence is Exodeoxyribonuclease 7 large subunit (459 aa).

Belongs to the XseA family. Heterooligomer composed of large and small subunits.

It localises to the cytoplasm. It catalyses the reaction Exonucleolytic cleavage in either 5'- to 3'- or 3'- to 5'-direction to yield nucleoside 5'-phosphates.. Its function is as follows. Bidirectionally degrades single-stranded DNA into large acid-insoluble oligonucleotides, which are then degraded further into small acid-soluble oligonucleotides. This chain is Exodeoxyribonuclease 7 large subunit, found in Pseudomonas putida (strain ATCC 47054 / DSM 6125 / CFBP 8728 / NCIMB 11950 / KT2440).